A 350-amino-acid polypeptide reads, in one-letter code: Ceramide synthase 1 (350 aa).

An N-acetylalanine modification is found at alanine 2. Helical transmembrane passes span 53–73 (AHLA…WTAL), 103–123 (AWKF…LFGT), 148–168 (IAAA…ATLY), 176–196 (SVVM…SYAF), 239–259 (AADL…LYWF), and 287–307 (LLLL…AFAA). Positions 97 to 311 (AKMPESAWKF…IVAFAAKVLT (215 aa)) constitute a TLC domain.

Acetylated. Deacetylation by SIRT3 increases enzyme activity and promotes mitochondrial ceramide accumulation.

It is found in the endoplasmic reticulum membrane. It catalyses the reaction a sphingoid base + octadecanoyl-CoA = an N-octadecanoyl-sphingoid base + CoA + H(+). The enzyme catalyses sphinganine + octadecanoyl-CoA = N-(octadecanoyl)-sphinganine + CoA + H(+). It carries out the reaction hexadecasphinganine + octadecanoyl-CoA = N-octadecanoylhexadecasphinganine + CoA + H(+). The catalysed reaction is sphing-4-enine + octadecanoyl-CoA = N-octadecanoylsphing-4-enine + CoA + H(+). It catalyses the reaction heptadecasphing-4-enine + octadecanoyl-CoA = N-octadecanoyl-heptadecasphing-4-enine + CoA + H(+). The enzyme catalyses 2-hydroxyoctadecanoyl-CoA + sphinganine = N-(2-hydroxyoctadecanoyl)-sphinganine + CoA + H(+). It carries out the reaction eicosanoyl-CoA + sphinganine = N-eicosanoylsphinganine + CoA + H(+). It participates in lipid metabolism; sphingolipid metabolism. Its activity is regulated as follows. Inhibited by fumonisin B1. In terms of biological role, ceramide synthase that catalyzes the transfer of the acyl chain from acyl-CoA to a sphingoid base, with high selectivity toward stearoyl-CoA (octadecanoyl-CoA; C18:0-CoA). N-acylates sphinganine and sphingosine bases to form dihydroceramides and ceramides in de novo synthesis and salvage pathways, respectively. Plays a predominant role in skeletal muscle in regulating C18 ceramide and dihydroceramide levels with an impact on whole-body glucose metabolism and insulin sensitivity. Protects from diet-induced obesity by suppressing the uptake of glucose in multiple organs in a FGF21-dependent way. Generates C18 ceramides in the brain, playing a critical role in cerebellar development and Purkinje cell function. In response to cellular stress mediates mitophagy, a known defense mechanism against cell transformation and aging. Upon mitochondria fission, generates C18 ceramides that anchor lipidated MAP1LC3B/LC3B-II autophagolysosomes to outer mitochondrial membranes to eliminate damaged mitochondria. The polypeptide is Ceramide synthase 1 (Homo sapiens (Human)).